The following is a 165-amino-acid chain: Probable calcium-binding protein CML18 (165 aa).

EF-hand domains follow at residues 16-51, 52-87, 90-125, and 126-161; these read EQLA…LGLK, PSQD…DLVK, YTDD…LGHA, and LTAE…AAFD. Asp29, Asn31, Asp33, Ser35, Glu40, Asp65, Asn67, Asn69, Glu76, Asp103, Asp105, Asn107, Tyr109, Glu114, Asp139, Asp141, Asp143, Cys145, and Glu150 together coordinate Ca(2+).

In terms of assembly, calcium and pH-dependent interaction with NHX1 (increases when pH decreases, better at pH 5.5 than at pH 7.5). Also interacts with the CPB protein At2g18750.

The protein localises to the vacuole. Its function is as follows. Potential calcium sensor that modulates ion selectivity of NHX1. The polypeptide is Probable calcium-binding protein CML18 (CML18) (Arabidopsis thaliana (Mouse-ear cress)).